Here is a 290-residue protein sequence, read N- to C-terminus: 4-hydroxy-tetrahydrodipicolinate synthase (290 aa).

Thr-44 is a binding site for pyruvate. Tyr-132 (proton donor/acceptor) is an active-site residue. Residue Lys-160 is the Schiff-base intermediate with substrate of the active site. Ile-202 is a binding site for pyruvate.

It belongs to the DapA family. Homotetramer; dimer of dimers.

It localises to the cytoplasm. It carries out the reaction L-aspartate 4-semialdehyde + pyruvate = (2S,4S)-4-hydroxy-2,3,4,5-tetrahydrodipicolinate + H2O + H(+). It functions in the pathway amino-acid biosynthesis; L-lysine biosynthesis via DAP pathway; (S)-tetrahydrodipicolinate from L-aspartate: step 3/4. Catalyzes the condensation of (S)-aspartate-beta-semialdehyde [(S)-ASA] and pyruvate to 4-hydroxy-tetrahydrodipicolinate (HTPA). This is 4-hydroxy-tetrahydrodipicolinate synthase from Citrifermentans bemidjiense (strain ATCC BAA-1014 / DSM 16622 / JCM 12645 / Bem) (Geobacter bemidjiensis).